Consider the following 178-residue polypeptide: MSRILKRIAAGVVIAGVAALLLAAGGYAAGARVNTTKSIPVGLYWTSSAPVEKGAYVLFCPPQLGVFDDAKERGYIGAGFCQGGYGYMMKRVLAAKDDAVAVADDGVRVNGELLPLSAPIKADKAGRPLPRYQSNSYTLGNSEVLLMSDVSATSFDGRYFGPINRSQIKTVIRPVITW.

The N-terminal stretch at 1–30 (MSRILKRIAAGVVIAGVAALLLAAGGYAAG) is a signal peptide.

The protein belongs to the peptidase S26C family.

It is found in the periplasm. In terms of biological role, required for donor-specific phage sensitivity. May be involved in pilus assembly. This Escherichia coli protein is Plasmid transfer protein TraF (traF).